We begin with the raw amino-acid sequence, 500 residues long: MNTFFSRLITVVACFFIFSAAWFCLWSISLHLVERPELAALLFPFGLRLGLMLQCPRGYWPVLLGAEWLLVYWLAQEVALAHLPLLMIGSVLTLLPVALTSRYRHQRDWRTLLLQGAALTAAALLQSLPWLGQGEEAWNALLLTLTGGLTLAPICLVFWHYLTSTTWLPLGPSLVSQPVNWRGRHLIWYLLLFIVSLWLQLGLPAELSRFTPFCLALPIIALAWHYGWQGALIATLMNAIALIASQTWHDHPVDLLLSLLAQSLTGLLLGAGIQRLRELNQSLQKELARNHRLAERLLETEESVRRDVARELHDDIGQTITAIRTQAGIVQRLAADNGGVKQSGQLIEQLSLGVYDAVRRLLGRLRPRQLDDLTLAQAIRSLLREMELESRGIVSHLDWRIDETALSESQRVTLFRVCQEGLNNIVKHANASAVTLQGWQQDERLMLVIEDDGSGLPPGSHQQGFGLTGMRERVSALGGTLTISCTHGTRVSVSLPQRYV.

8 helical membrane passes run 8–28 (LITV…LWSI), 78–98 (VALA…LPVA), 112–132 (LLLQ…PWLG), 140–160 (ALLL…VFWH), 185–205 (HLIW…GLPA), 207–224 (LSRF…ALAW), 231–249 (ALIA…QTWH), and 253–273 (VDLL…GAGI). Residues 274–500 (QRLRELNQSL…VSVSLPQRYV (227 aa)) lie on the Cytoplasmic side of the membrane. Residues 311–499 (ELHDDIGQTI…RVSVSLPQRY (189 aa)) enclose the Histidine kinase domain. At His-313 the chain carries Phosphohistidine; by autocatalysis.

Autophosphorylated.

The protein resides in the cell inner membrane. It catalyses the reaction ATP + protein L-histidine = ADP + protein N-phospho-L-histidine.. Part of the UhpABC signaling cascade that controls the expression of the hexose phosphate transporter UhpT. UhpB functions as a membrane-associated protein kinase that autophosphorylates in response to interaction with UhpC, and subsequently transfers its phosphate group to the response regulator UhpA. Can also dephosphorylate UhpA. In Salmonella typhimurium (strain LT2 / SGSC1412 / ATCC 700720), this protein is Signal transduction histidine-protein kinase/phosphatase UhpB (uhpB).